Reading from the N-terminus, the 208-residue chain is Ypt/Rab-type GTPase YPT7 (208 aa).

Residues 17–23 (SGVGKTS), 33–40 (YSQQYKAT), Gly67, and 126–129 (NKID) contribute to the GTP site. The Effector region signature appears at 37–45 (YKATIGADF). Lys147 is covalently cross-linked (Glycyl lysine isopeptide (Lys-Gly) (interchain with G-Cter in ubiquitin)). 158 to 160 (SAK) contacts GTP. Residues Cys206 and Cys208 are each lipidated (S-geranylgeranyl cysteine). Cys208 bears the Cysteine methyl ester mark.

Belongs to the small GTPase superfamily. Rab family. In terms of assembly, interacts with IVY1. Interacts with YIF1, YIP4 and YIP5. Interacts with the HOPS complex. Interacts with the class C-Vps complex. Interacts with VPS35. Interacts with VPS39. Interacts with the GDP dissociation inhibitor GDI1. Interacts with CCZ1.

It localises to the late endosome. It is found in the vacuole membrane. Its activity is regulated as follows. Rab activation is generally mediated by a guanine exchange factor (GEF), while inactivation through hydrolysis of bound GTP is catalyzed by a GTPase activating protein (GAP). YPT7 is activated by GEFs MON1-CCZ1 complex (MC1) and VAM6/VPS39, and inactivated by GAPs GYP7 and GYP1. Ypt/Rab-type GTPases are key regulators of membrane trafficking and intracellular vesicular transport. They act as molecular switches that convert between GTP-bound and GDP-bound states, and regulate virtually all steps of membrane traffic from the formation of the transport vesicle at the donor membrane to its fusion at the target membrane. In the GDP-bound state, Ypt proteins are predominantly cytosolic, solubilized through the interaction with a GDP dissociation inhibitor (GDI). In the GTP-bound state, the proteins are membrane bound and interact with specific effector proteins that select cargo, promote vesicle movement, or verify the correct site of fusion. Involved in regulation of vesicular protein transport in exo- and endocytosis. Involved in regulation of late endosome to vacuole trafficking and homotypic vacuole fusion, by interacting in its GTP-bound state on the donor membrane with the large multiprotein HOPS/class C-Vps tethering complex on the acceptor membrane. Involved in retromer assembly and cargo export, recognizing the cargo selection complex (CSC). GTP-bound YPT7 recruits CSC to vacuolar membranes via retromer subunit VPS35. Interacts with the HOPS complex subunit VPS39 independent of the HOPS complex at mitochondria-vacuole contact sites (vCLAMPs), providing a physical and metabolic interconnection between the endocytic pathway and mitochondria. The polypeptide is Ypt/Rab-type GTPase YPT7 (YPT7) (Saccharomyces cerevisiae (strain ATCC 204508 / S288c) (Baker's yeast)).